A 1401-amino-acid chain; its full sequence is Lysine-specific demethylase 6A (1401 aa).

The interaction with SUPT6H stretch occupies residues 1-1095; the sequence is MKSCGVSLAT…TNIDLSDDKK (1095 aa). TPR repeat units lie at residues 93 to 126, 130 to 163, 170 to 199, 205 to 238, 250 to 283, 284 to 317, 318 to 351, and 352 to 385; these read SDFFCQLGHFNLLLEDYPKALSAYQRYYSLQSDY, AAFLYGLGLVYFHYNAFQWAIKAFQEVLYVDPSF, HLRLGLMFKVNTDYESSLKHFQLALVDCNP, AEIQFHIAHLYETQRKYHSAKEAYEQLLQTENLS, GWMHHTVDLLGDKATKESYAIQYLQKSLEADPNS, GQSWYFLGRCYSSIGKVQDAFISYRQSIDKSEAS, ADTWCSIGVLYQQQNQPMDALQAYICAVQLDHGH, and AAAWMDLGTLYESCNQPQDAIKCYLNATRSKSCS. Positions 437–449 are enriched in polar residues; it reads AMNTAQQNTSDNW. The interval 437–457 is disordered; that stretch reads AMNTAQQNTSDNWSGGHAVSH. An Omega-N-methylarginine modification is found at R519. The tract at residues 521–541 is disordered; sequence TGIPNGPTADSSLPTNSVSGQ. Omega-N-methylarginine is present on R549. 2 stretches are compositionally biased toward polar residues: residues 624–652 and 660–724; these read LTSSAEEPWKNQLSNSTQGLHKGQSSHSA and LSST…SGNI. 5 disordered regions span residues 624-746, 758-778, 810-864, 914-940, and 1043-1079; these read LTSS…SVEG, AVCSPSHGDSKSPGLLSSDNP, KTDN…ESQS, LLDKCPPPRPPSSPYPPLPKDKLNPPT, and FQESLREENEKRSHHKDHSDSESTSSDNSGRRRKGPF. A Phosphoserine modification is found at S769. Over residues 814 to 833 the composition is skewed to low complexity; it reads SVASSPSSAISTATPSPKST. T827 bears the Phosphothreonine mark. S829 carries the post-translational modification Phosphoserine. The span at 834-848 shows a compositional bias: polar residues; sequence EQTTTNSVTSLNSPH. Residues 918–931 are compositionally biased toward pro residues; it reads CPPPRPPSSPYPPL. A compositionally biased stretch (basic and acidic residues) spans 1046 to 1063; it reads SLREENEKRSHHKDHSDS. The JmjC domain occupies 1095–1258; that stretch reads KWKLQLHELT…YKLAVERYEW (164 aa). 3 residues coordinate Fe cation: H1146, E1148, and H1226. The Zn(2+) site is built by C1331, C1334, C1358, and C1361.

Belongs to the UTX family. As to quaternary structure, interacts with TLE1. Component of the MLL2/3 complex (also named ASCOM complex), at least composed of KMT2D/MLL2 or KMT2C/MLL3, ASH2L, RBBP5, WDR5, NCOA6, DPY30, KDM6A (or KDM6B), PAXIP1/PTIP, PAGR1 and alpha- and beta-tubulin. Interacts with SUPT6H. Interacts with SMARCA4. Interacts with PROSER1. The cofactor is L-ascorbate. It depends on Fe(2+) as a cofactor.

The protein localises to the nucleus. The catalysed reaction is N(6),N(6),N(6)-trimethyl-L-lysyl(27)-[histone H3] + 2 2-oxoglutarate + 2 O2 = N(6)-methyl-L-lysyl(27)-[histone H3] + 2 formaldehyde + 2 succinate + 2 CO2. Histone demethylase that specifically demethylates 'Lys-27' of histone H3, thereby playing a central role in histone code. Demethylates trimethylated and dimethylated but not monomethylated H3 'Lys-27'. Plays a central role in regulation of posterior development, by regulating HOX gene expression. Demethylation of 'Lys-27' of histone H3 is concomitant with methylation of 'Lys-4' of histone H3, and regulates the recruitment of the PRC1 complex and monoubiquitination of histone H2A. Plays a demethylase-independent role in chromatin remodeling to regulate T-box family member-dependent gene expression. This is Lysine-specific demethylase 6A (KDM6A) from Homo sapiens (Human).